A 91-amino-acid chain; its full sequence is Acylphosphatase (91 aa).

The region spanning 4–91 (RAIVTIKGLV…GEFDDFDVRY (88 aa)) is the Acylphosphatase-like domain. Residues Arg-19 and Asn-37 contribute to the active site.

The protein belongs to the acylphosphatase family.

The enzyme catalyses an acyl phosphate + H2O = a carboxylate + phosphate + H(+). This chain is Acylphosphatase (acyP), found in Geobacter sulfurreducens (strain ATCC 51573 / DSM 12127 / PCA).